Reading from the N-terminus, the 435-residue chain is GTPase Der (435 aa).

2 consecutive EngA-type G domains span residues 8-169 (NLVA…NFEN) and 176-351 (FKIA…NNLS). GTP is bound by residues 14–21 (GKPNVGKS), 61–65 (DTGGI), 123–126 (NKLD), 182–189 (GKPNAGKS), 229–233 (DTAGI), and 294–297 (NKWD). The region spanning 352-435 (REIKQNLLND…PINLVLKKNK (84 aa)) is the KH-like domain.

It belongs to the TRAFAC class TrmE-Era-EngA-EngB-Septin-like GTPase superfamily. EngA (Der) GTPase family. As to quaternary structure, associates with the 50S ribosomal subunit.

GTPase that plays an essential role in the late steps of ribosome biogenesis. The sequence is that of GTPase Der from Mycoplasmopsis pulmonis (strain UAB CTIP) (Mycoplasma pulmonis).